The sequence spans 336 residues: Holliday junction branch migration complex subunit RuvB (336 aa).

The segment at 4-184 (ADRLIQPQVQ…FGIPLRLEFY (181 aa)) is large ATPase domain (RuvB-L). ATP contacts are provided by residues Arg-24, Gly-65, Lys-68, Thr-69, Thr-70, 131 to 133 (EDY), Arg-174, Tyr-184, and Arg-221. Thr-69 is a Mg(2+) binding site. The interval 185 to 255 (NVADLTTIVT…VAEYALDLLD (71 aa)) is small ATPAse domain (RuvB-S). Positions 258-336 (DQGFDYLDRK…HFSLVRPEKA (79 aa)) are head domain (RuvB-H). Positions 294, 313, and 318 each coordinate DNA.

This sequence belongs to the RuvB family. Homohexamer. Forms an RuvA(8)-RuvB(12)-Holliday junction (HJ) complex. HJ DNA is sandwiched between 2 RuvA tetramers; dsDNA enters through RuvA and exits via RuvB. An RuvB hexamer assembles on each DNA strand where it exits the tetramer. Each RuvB hexamer is contacted by two RuvA subunits (via domain III) on 2 adjacent RuvB subunits; this complex drives branch migration. In the full resolvosome a probable DNA-RuvA(4)-RuvB(12)-RuvC(2) complex forms which resolves the HJ.

Its subcellular location is the cytoplasm. It carries out the reaction ATP + H2O = ADP + phosphate + H(+). The RuvA-RuvB-RuvC complex processes Holliday junction (HJ) DNA during genetic recombination and DNA repair, while the RuvA-RuvB complex plays an important role in the rescue of blocked DNA replication forks via replication fork reversal (RFR). RuvA specifically binds to HJ cruciform DNA, conferring on it an open structure. The RuvB hexamer acts as an ATP-dependent pump, pulling dsDNA into and through the RuvAB complex. RuvB forms 2 homohexamers on either side of HJ DNA bound by 1 or 2 RuvA tetramers; 4 subunits per hexamer contact DNA at a time. Coordinated motions by a converter formed by DNA-disengaged RuvB subunits stimulates ATP hydrolysis and nucleotide exchange. Immobilization of the converter enables RuvB to convert the ATP-contained energy into a lever motion, pulling 2 nucleotides of DNA out of the RuvA tetramer per ATP hydrolyzed, thus driving DNA branch migration. The RuvB motors rotate together with the DNA substrate, which together with the progressing nucleotide cycle form the mechanistic basis for DNA recombination by continuous HJ branch migration. Branch migration allows RuvC to scan DNA until it finds its consensus sequence, where it cleaves and resolves cruciform DNA. This chain is Holliday junction branch migration complex subunit RuvB, found in Shewanella frigidimarina (strain NCIMB 400).